The primary structure comprises 1480 residues: C-type mannose receptor 2 (1480 aa).

Positions 1–30 are cleaved as a signal peptide; that stretch reads MGPIRPALAPWPRHLLRCVLLLGGLRLGHP. The Extracellular portion of the chain corresponds to 31–1413; that stretch reads ADSAAALLEP…SAALPENPVA (1383 aa). The region spanning 40–166 is the Ricin B-type lectin domain; the sequence is PDVFLIFSQG…WNIYGSEEDL (127 aa). 2 disulfide bridges follow: cysteine 53/cysteine 67 and cysteine 92/cysteine 111. 2 N-linked (GlcNAc...) asparagine glycosylation sites follow: asparagine 101 and asparagine 139. One can recognise a Fibronectin type-II domain in the interval 181–229; that stretch reads SHGKPCTIPFKYDNQWFHGCTSTGREDGHLWCATTQDYGKDERWGFCPI. 4 cysteine pairs are disulfide-bonded: cysteine 186–cysteine 212, cysteine 200–cysteine 227, cysteine 265–cysteine 358, and cysteine 334–cysteine 350. Residues 243 to 359 enclose the C-type lectin 1 domain; the sequence is LTDSCYQFNF…CSIALPYVCK (117 aa). A glycan (N-linked (GlcNAc...) asparagine) is linked at asparagine 363. C-type lectin domains lie at 388–504, 527–643, 677–808, 831–950, 978–1106, 1131–1242, and 1271–1391; these read FQGH…SICK, HSPS…RYIC, KLRH…WICK, FQEA…YICK, FLNK…GFIC, YLNR…GAVC, and FREH…GVVC. Disulfide bonds link cysteine 409-cysteine 503, cysteine 480-cysteine 495, cysteine 617-cysteine 634, cysteine 703-cysteine 807, cysteine 784-cysteine 799, cysteine 852-cysteine 949, and cysteine 926-cysteine 941. A glycan (N-linked (GlcNAc...) asparagine) is linked at asparagine 1028. A disulfide bridge connects residues cysteine 1077 and cysteine 1097. Lysine 1141 is covalently cross-linked (Glycyl lysine isopeptide (Lys-Gly) (interchain with G-Cter in SUMO1)). Cysteines 1219 and 1233 form a disulfide. A glycan (N-linked (GlcNAc...) asparagine) is linked at asparagine 1348. Residues cysteine 1367 and cysteine 1382 are joined by a disulfide bond. Residues 1414–1434 form a helical membrane-spanning segment; the sequence is LVVVLTAAVLLLLALLTGALI. The Cytoplasmic portion of the chain corresponds to 1435-1480; sequence LYRRRQSAERGSFEGARYSRSSRSGPAEATEKNILVSDMEMNEQQE. Residues 1446-1480 are disordered; sequence SFEGARYSRSSRSGPAEATEKNILVSDMEMNEQQE.

In terms of assembly, interacts directly with PLAUR/UPAR and PLAU/pro-UPA to form a tri-molecular complex. Interacts with collagen V. Interacts with C-terminal region of type I collagen/COL1A1. N-glycosylated. In terms of processing, phosphorylated.

Its subcellular location is the cell membrane. Its function is as follows. May play a role as endocytotic lectin receptor displaying calcium-dependent lectin activity. Internalizes glycosylated ligands from the extracellular space for release in an endosomal compartment via clathrin-mediated endocytosis. May be involved in plasminogen activation system controlling the extracellular level of PLAUR/PLAU, and thus may regulate protease activity at the cell surface. May contribute to cellular uptake, remodeling and degradation of extracellular collagen matrices. May participate in remodeling of extracellular matrix cooperating with the matrix metalloproteinases (MMPs) secreted by hepatic stellate cells. May mediate endocytosis of partially degraded collagens and glycoproteins produced in the extracellular matrix by MMPs. This chain is C-type mannose receptor 2 (Mrc2), found in Rattus norvegicus (Rat).